The sequence spans 164 residues: Cytochrome c-type biogenesis protein CcmE (164 aa).

Residues Met-1–Arg-8 lie on the Cytoplasmic side of the membrane. Residues Leu-9–Ala-29 traverse the membrane as a helical; Signal-anchor for type II membrane protein segment. The Periplasmic segment spans residues Leu-30–Gly-164. Heme-binding residues include His-132 and Tyr-136.

Belongs to the CcmE/CycJ family.

It localises to the cell inner membrane. Its function is as follows. Heme chaperone required for the biogenesis of c-type cytochromes. Transiently binds heme delivered by CcmC and transfers the heme to apo-cytochromes in a process facilitated by CcmF and CcmH. The protein is Cytochrome c-type biogenesis protein CcmE of Pseudoalteromonas atlantica (strain T6c / ATCC BAA-1087).